The following is a 1071-amino-acid chain: DNA-directed RNA polymerase subunit beta (1071 aa).

It belongs to the RNA polymerase beta chain family. In plastids the minimal PEP RNA polymerase catalytic core is composed of four subunits: alpha, beta, beta', and beta''. When a (nuclear-encoded) sigma factor is associated with the core the holoenzyme is formed, which can initiate transcription.

The protein localises to the plastid. Its subcellular location is the chloroplast. It carries out the reaction RNA(n) + a ribonucleoside 5'-triphosphate = RNA(n+1) + diphosphate. Its function is as follows. DNA-dependent RNA polymerase catalyzes the transcription of DNA into RNA using the four ribonucleoside triphosphates as substrates. This Anthoceros angustus (Hornwort) protein is DNA-directed RNA polymerase subunit beta.